A 458-amino-acid polypeptide reads, in one-letter code: Lysine-rich nucleolar protein 1 (458 aa).

A compositionally biased stretch (basic and acidic residues) spans 1-14 (MITKTHKVDLGLPE). Residues 1–21 (MITKTHKVDLGLPEKKKKKKV) are disordered. Lysine 7 participates in a covalent cross-link: Glycyl lysine isopeptide (Lys-Gly) (interchain with G-Cter in SUMO2). Serine 42 and serine 50 each carry phosphoserine. The tract at residues 46–305 (ATSPSKSVAH…ESGVAGDPWK (260 aa)) is disordered. A compositionally biased stretch (basic residues) spans 64–73 (VKKKKKKKKG). A Glycyl lysine isopeptide (Lys-Gly) (interchain with G-Cter in SUMO2) cross-link involves residue lysine 101. Serine 111 bears the Phosphoserine mark. Residue lysine 130 forms a Glycyl lysine isopeptide (Lys-Gly) (interchain with G-Cter in SUMO2) linkage. Serine 132 carries the post-translational modification Phosphoserine. The segment covering 145-155 (GKKLKKHKKEK) has biased composition (basic residues). The segment covering 173-192 (EAREARDVGDTCSVGKKDEE) has biased composition (basic and acidic residues). The segment covering 198–218 (QKRKRKSPREHNGKVKKKKKI) has biased composition (basic residues). Residue lysine 249 forms a Glycyl lysine isopeptide (Lys-Gly) (interchain with G-Cter in SUMO1); alternate linkage. Lysine 249 is covalently cross-linked (Glycyl lysine isopeptide (Lys-Gly) (interchain with G-Cter in SUMO2); alternate). Position 265 is a phosphoserine (serine 265). Positions 265–274 (SAKKKMKSKK) are enriched in basic residues. Residues lysine 275, lysine 287, and lysine 305 each participate in a glycyl lysine isopeptide (Lys-Gly) (interchain with G-Cter in SUMO2) cross-link. Positions 306–458 (EETDTDLEVV…NASKSVKLED (153 aa)) are interaction with ZNF106. A phosphothreonine mark is found at threonine 308 and threonine 310. Residues lysine 319, lysine 353, lysine 373, lysine 375, and lysine 407 each participate in a glycyl lysine isopeptide (Lys-Gly) (interchain with G-Cter in SUMO2) cross-link. A compositionally biased stretch (basic and acidic residues) spans 336 to 353 (QEEIDRESGKTEASETRK). The interval 336 to 355 (QEEIDRESGKTEASETRKWT) is disordered. Position 430 is an omega-N-methylarginine (arginine 430). Lysine 442 participates in a covalent cross-link: Glycyl lysine isopeptide (Lys-Gly) (interchain with G-Cter in SUMO2).

As to quaternary structure, interacts with ZNF106.

The protein localises to the nucleus. It localises to the nucleolus. This Homo sapiens (Human) protein is Lysine-rich nucleolar protein 1 (KNOP1).